A 141-amino-acid polypeptide reads, in one-letter code: ATP synthase epsilon chain (141 aa).

It belongs to the ATPase epsilon chain family. As to quaternary structure, F-type ATPases have 2 components, CF(1) - the catalytic core - and CF(0) - the membrane proton channel. CF(1) has five subunits: alpha(3), beta(3), gamma(1), delta(1), epsilon(1). CF(0) has three main subunits: a, b and c.

It localises to the cell inner membrane. In terms of biological role, produces ATP from ADP in the presence of a proton gradient across the membrane. The protein is ATP synthase epsilon chain of Pseudomonas fluorescens (strain ATCC BAA-477 / NRRL B-23932 / Pf-5).